The sequence spans 334 residues: MASFDFIDEVKKYVQAGHGGPGVVHFRREKFVPKGGPDGGDGGKGGDIILKGNKQLSTLLHLKYRKHIVAEDGKSGEGGCRTGADGTSIILEVPLGTVAKDIDSGNILVDITEDGQQTILLHGGRGGQGNVHFKTPTQQAPRHAQPGESGEEGWIKLELKLLAEVGLVGFPNAGKSTLLASISAAKPKIANYPFTTLVPQLGVVAYREGHSFVLADMPGIIEGASMGKGLGTRFLKHIERNRVLVLMISADDTANIVQTYTSLLKELKSYSEDLFKKPRILVISKLDLIGAEEKVTIKKLLPKQIDCVFISSVTGEGLQKFKDKIWKLLHPELK.

An Obg domain is found at 4–162; sequence FDFIDEVKKY…GWIKLELKLL (159 aa). One can recognise an OBG-type G domain in the interval 163–330; it reads AEVGLVGFPN…FKDKIWKLLH (168 aa). GTP-binding positions include 169 to 176, 194 to 198, 216 to 219, 284 to 287, and 311 to 313; these read GFPNAGKS, FTTLV, DMPG, SKLD, and SSV. Mg(2+) is bound by residues serine 176 and threonine 196.

The protein belongs to the TRAFAC class OBG-HflX-like GTPase superfamily. OBG GTPase family. As to quaternary structure, monomer. It depends on Mg(2+) as a cofactor.

Its subcellular location is the cytoplasm. Functionally, an essential GTPase which binds GTP, GDP and possibly (p)ppGpp with moderate affinity, with high nucleotide exchange rates and a fairly low GTP hydrolysis rate. Plays a role in control of the cell cycle, stress response, ribosome biogenesis and in those bacteria that undergo differentiation, in morphogenesis control. The sequence is that of GTPase Obg from Amoebophilus asiaticus (strain 5a2).